The chain runs to 88 residues: Small ribosomal subunit protein uS15 (88 aa).

It belongs to the universal ribosomal protein uS15 family. In terms of assembly, part of the 30S ribosomal subunit. Forms a bridge to the 50S subunit in the 70S ribosome, contacting the 23S rRNA.

One of the primary rRNA binding proteins, it binds directly to 16S rRNA where it helps nucleate assembly of the platform of the 30S subunit by binding and bridging several RNA helices of the 16S rRNA. Its function is as follows. Forms an intersubunit bridge (bridge B4) with the 23S rRNA of the 50S subunit in the ribosome. This Hydrogenovibrio crunogenus (strain DSM 25203 / XCL-2) (Thiomicrospira crunogena) protein is Small ribosomal subunit protein uS15.